Reading from the N-terminus, the 508-residue chain is Photosystem II CP47 reaction center protein (508 aa).

Helical transmembrane passes span Ser21–Ser36, Ile101–Trp115, Gly140–Phe156, Ile203–Ser218, Val237–Val252, and Ser457–Arg472.

This sequence belongs to the PsbB/PsbC family. PsbB subfamily. As to quaternary structure, PSII is composed of 1 copy each of membrane proteins PsbA, PsbB, PsbC, PsbD, PsbE, PsbF, PsbH, PsbI, PsbJ, PsbK, PsbL, PsbM, PsbT, PsbX, PsbY, PsbZ, Psb30/Ycf12, at least 3 peripheral proteins of the oxygen-evolving complex and a large number of cofactors. It forms dimeric complexes. The cofactor is Binds multiple chlorophylls. PSII binds additional chlorophylls, carotenoids and specific lipids..

The protein localises to the plastid. It localises to the chloroplast thylakoid membrane. Functionally, one of the components of the core complex of photosystem II (PSII). It binds chlorophyll and helps catalyze the primary light-induced photochemical processes of PSII. PSII is a light-driven water:plastoquinone oxidoreductase, using light energy to abstract electrons from H(2)O, generating O(2) and a proton gradient subsequently used for ATP formation. This chain is Photosystem II CP47 reaction center protein, found in Arabis hirsuta (Hairy rock-cress).